Here is a 316-residue protein sequence, read N- to C-terminus: Transaldolase (316 aa).

Catalysis depends on Lys-127, which acts as the Schiff-base intermediate with substrate.

It belongs to the transaldolase family. Type 2 subfamily.

The protein resides in the cytoplasm. It catalyses the reaction D-sedoheptulose 7-phosphate + D-glyceraldehyde 3-phosphate = D-erythrose 4-phosphate + beta-D-fructose 6-phosphate. The protein operates within carbohydrate degradation; pentose phosphate pathway; D-glyceraldehyde 3-phosphate and beta-D-fructose 6-phosphate from D-ribose 5-phosphate and D-xylulose 5-phosphate (non-oxidative stage): step 2/3. Transaldolase is important for the balance of metabolites in the pentose-phosphate pathway. This is Transaldolase from Helicobacter pylori (strain Shi470).